A 231-amino-acid polypeptide reads, in one-letter code: Thermonuclease (231 aa).

A signal peptide spans 1–26 (MLVMTEYLLSAGICMAIVSILLIGMA). Propeptides lie at residues 27–63 (ISNV…SANA) and 64–82 (SQTD…TVYS). Positions 61 to 73 (ANASQTDNGVNRS) are enriched in polar residues. The disordered stretch occupies residues 61 to 86 (ANASQTDNGVNRSGSEDPTVYSATST). Residue D103 coordinates Ca(2+). Residue R117 is part of the active site. Residues D122 and T123 each coordinate Ca(2+). Active-site residues include E125 and R169. Residues 203–219 (HEQHLRKSEAQAKKEKL) are compositionally biased toward basic and acidic residues. The disordered stretch occupies residues 203 to 231 (HEQHLRKSEAQAKKEKLNIWSEDNADSGQ).

This sequence belongs to the thermonuclease family. Requires Ca(2+) as cofactor.

The protein resides in the secreted. The protein localises to the membrane. The enzyme catalyses Endonucleolytic cleavage to nucleoside 3'-phosphates and 3'-phosphooligonucleotide end-products.. Enzyme that catalyzes the hydrolysis of both DNA and RNA at the 5' position of the phosphodiester bond. The protein is Thermonuclease of Staphylococcus aureus.